An 807-amino-acid polypeptide reads, in one-letter code: MELHQWCRHIIVFLLNVWIPSCFAQTTPPARSSPTPTPQTADNPDSLKFRLSGFPRKHNEGRIEVFYKGEWGTICDDDFSLANAHVLCRQLGFVSATGWTHSAKYGKGAGKIWLDNVQCSGSERSVSVCKSRGWGNSDCTHDEDAGVICKDERLPGFVDSNVIEVQVDENRVEEVRLRPVFTTATKRMPVTEGVVEVKNKDGWAQICDIGWTPKNTHVVCGMMGFPHEKKVNKNFYKLYAERQKNFFLVHSVACLGTEVHLAACPLEFNYGNATESCPGGMPAVVSCVPGPLYTQSPTMKKKLKMPPTTRLKGGAKYGEGRVEVLKGSEWGTVCDDRWNLVSASVVCREMGFGSAKEALTGASMGKGLGPIHMNEVQCTGNERSLWSCRYKNITAEDCKHTEDASVRCNVPYMGYEKTVRILGGRTRYEGRVEVLHREADGTLRWGLICGEGWGTQEAMVLCRQLGLGYANHGLQVRLSGGRSPYEGRVEVRVGQRWGSVCSEGWSTKEAMVLCRQLGLGFSMHAITETWYWDSSNVTDMVMSGVKCTGDEMSISQCQHHRTVNCQKAAARFAAGVICSETASDLVLNAPLVQQTTYIEDRPLHMLYCAAEEDCLSKSAASANWPYGHRRLLRFSSQIHNIGRADFRPKAGRHSWVWHACHGHYHSMDIFTHYDLMSANGTKVAEGHKASFCLEDTDCDEGVSKRYKCANFGEQGITVGCWDLYRHDIDCQWIDITDVKPGNYILQVVINPNYEVSESDFTNNAMKCNCKYDGHRIWVHNCHIGDAFSEEAEKKFEKYPGQLNNQIS.

Positions 1-24 are cleaved as a signal peptide; the sequence is MELHQWCRHIIVFLLNVWIPSCFA. SRCR domains lie at 49-150, 175-288, 309-409, 419-470, and 476-579; these read FRLS…VICK, VRLR…VSCV, TRLK…VRCN, VRIL…LGYA, and VRLS…VICS. Intrachain disulfides connect C75–C139, C88–C149, C119–C129, C207–C277, C220–C287, C254–C264, C334–C398, C347–C408, and C378–C388. An N-linked (GlcNAc...) asparagine glycan is attached at N272. N392 carries an N-linked (GlcNAc...) asparagine glycan. 2 disulfide bridges follow: C514-C578 and C547-C557. N-linked (GlcNAc...) asparagine glycosylation is present at N536. A glycan (N-linked (GlcNAc...) asparagine) is linked at N679. Residues 688 to 724 constitute a cross-link (lysine tyrosylquinone (Lys-Tyr)); that stretch reads KASFCLEDTDCDEGVSKRYKCANFGEQGITVGCWDLY. Y724 carries the post-translational modification 2',4',5'-topaquinone.

The protein belongs to the lysyl oxidase family. It depends on Cu cation as a cofactor. Requires lysine tyrosylquinone residue as cofactor. In terms of processing, the lysine tyrosylquinone cross-link (LTQ) is generated by condensation of the epsilon-amino group of a lysine with a topaquinone produced by oxidation of tyrosine.

The protein resides in the secreted. It is found in the extracellular space. It localises to the cytoplasm. The protein localises to the nucleus. It catalyses the reaction L-lysyl-[protein] + O2 + H2O = (S)-2-amino-6-oxohexanoyl-[protein] + H2O2 + NH4(+). It carries out the reaction N(6)-acetyl-L-lysyl-[protein] + O2 + H2O = acetamide + (S)-2-amino-6-oxohexanoyl-[protein] + H2O2. In terms of biological role, protein-lysine 6-oxidase that mediates the oxidation of peptidyl lysine residues to allysine in target proteins. Catalyzes the post-translational oxidative deamination of peptidyl lysine residues in precursors of elastin and different types of collagens, a prerequisite in the formation of cross-links between collagens and elastin. Can mediate oxidation of lysine residues that are acetylated. Also able to catalyze deacetylation of lysine residues. Required for maturation of neural crest derived cartilage elements. The polypeptide is Lysyl oxidase homolog 3B (Danio rerio (Zebrafish)).